The sequence spans 274 residues: MKKVAIVGLGWLGMPLAMSLSARGWQVTGSKTTQDGVEAARMSGIDSYLLRMEPELVCDSDDLDALMDADALVITLPARRSGPGDEFYLQAVQELVDSALAHRIPRIIFTSSTSVYGDAQGTVKETTPRNPVTNSGRVLEELEDWLHNLPGTSVDILRLAGLVGPGRHPGRFFAGKTAPDGEHGVNLVHLEDVIGAITLLLQAPKGGHIYNICAPAHPARNVFYPQMARLLGLEPPQFRNSLDSGKGKIIDGSRICNELGFEYQYPDPLVMPLE.

Residues 1-24 (MKKVAIVGLGWLGMPLAMSLSARG) form the signal peptide. 170–177 (GRFFAGKT) provides a ligand contact to ATP.

The protein is Protein YeeZ (yeeZ) of Escherichia coli O157:H7.